A 418-amino-acid chain; its full sequence is Phosphoglycerate kinase (418 aa).

Residues Val-24, Asp-25, Phe-26, Asn-27, Arg-40, Ser-63, His-64, Gly-66, Arg-67, Leu-122, Arg-123, His-169, and Arg-170 each contribute to the (2R)-3-phosphoglycerate site. Gly-213 contacts ADP. Gly-213 serves as a coordination point for CDP. AMP is bound by residues Ala-214 and Lys-215. Ala-214 serves as a coordination point for ATP. Ala-214 lines the Mg(2+) pocket. Mg(2+) is bound by residues Ala-217 and Asp-218. A CDP-binding site is contributed by Asp-218. AMP is bound at residue Lys-219. Lys-219 serves as a coordination point for ATP. Residue Gly-237 participates in ADP binding. Gly-237 is a CDP binding site. AMP is bound by residues Gly-238 and Gly-312. 2 residues coordinate ATP: Gly-238 and Gly-312. CDP is bound by residues Gly-337 and Phe-342. Residue Phe-342 coordinates ADP. An AMP-binding site is contributed by Glu-343. ATP contacts are provided by Glu-343, Asp-374, and Thr-375. Position 374 (Asp-374) interacts with Mg(2+).

It belongs to the phosphoglycerate kinase family. In terms of assembly, monomer. It depends on Mg(2+) as a cofactor.

It carries out the reaction (2R)-3-phosphoglycerate + ATP = (2R)-3-phospho-glyceroyl phosphate + ADP. It functions in the pathway carbohydrate degradation; glycolysis; pyruvate from D-glyceraldehyde 3-phosphate: step 2/5. The chain is Phosphoglycerate kinase (PGK) from Euplotes crassus.